The chain runs to 475 residues: Ubiquitin carboxyl-terminal hydrolase calypso (475 aa).

The UCH catalytic domain maps to 44-275; it reads GWLELESDPG…IRFNLMAVVP (232 aa). The Nucleophile role is filled by Cys-130. The active-site Proton donor is His-212. Residues 333–360 are a coiled coil; that stretch reads AKDLQLLLKNLDTEIAINEQNLADENDR. The region spanning 374-402 is the ULD domain; the sequence is NYDKFICTFLSMLAHQGVLGELVSQHLLP. Positions 404–475 are positively charged C-terminal tail required for binding nucleosomes; sequence KKVSGQSAAN…KGRNKCRKRK (72 aa). The interval 411-475 is disordered; that stretch reads AANRISKQNS…KGRNKCRKRK (65 aa). A compositionally biased stretch (low complexity) spans 419–460; the sequence is NSAASSAGANAGAAAGVTPKSQQQQQQPQTAASKNGKSPGKT. Positions 461–475 are enriched in basic residues; it reads PGRRRKGRNKCRKRK.

The protein belongs to the peptidase C12 family. BAP1 subfamily. Catalytic component of the polycomb repressive deubiquitinase (PR-DUB) complex, at least composed of caly/calypso, Asx and sba (MBD5/6 homolog). The PR-DUB complex associates with nucleosomes to mediate deubiquitination of histone H2AK118ub1 substrates; the association requires the positively charged C-terminal tail of caly, probably due to direct binding of DNA. Interacts (via ULD domain) with Asx (via DEUBAD domain); the interaction produces a stable heterodimer with a composite binding site for ubiquitin. Homodimerizes (via coiled-coil hinge-region between the UCH and ULD domains) to mediate assembly of 2 copies of the caly-Asx heterodimer into a bisymmetric tetramer; dimerization enhances PR-DUB association with nucleosomes.

The protein localises to the nucleus. It carries out the reaction Thiol-dependent hydrolysis of ester, thioester, amide, peptide and isopeptide bonds formed by the C-terminal Gly of ubiquitin (a 76-residue protein attached to proteins as an intracellular targeting signal).. In terms of biological role, catalytic component of the polycomb repressive deubiquitinase (PR-DUB) complex, a complex that specifically mediates deubiquitination of histone H2A monoubiquitinated at 'Lys-119' (H2AK118ub1). Mediates bisymmetric organization of the PR-DUB complex and is involved in association with nucleosomes to mediate deubiquitination. Does not deubiquitinate monoubiquitinated histone H2B. Required to maintain the transcriptionally repressive state of homeotic genes throughout development. The PR-DUB complex has weak or no activity toward 'Lys-48'- and 'Lys-63'-linked polyubiquitin chains. Polycomb group (PcG) protein. This is Ubiquitin carboxyl-terminal hydrolase calypso from Drosophila persimilis (Fruit fly).